Consider the following 474-residue polypeptide: 3-isopropylmalate dehydratase large subunit (474 aa).

Residues Cys350, Cys415, and Cys418 each contribute to the [4Fe-4S] cluster site.

This sequence belongs to the aconitase/IPM isomerase family. LeuC type 1 subfamily. Heterodimer of LeuC and LeuD. [4Fe-4S] cluster is required as a cofactor.

It catalyses the reaction (2R,3S)-3-isopropylmalate = (2S)-2-isopropylmalate. Its pathway is amino-acid biosynthesis; L-leucine biosynthesis; L-leucine from 3-methyl-2-oxobutanoate: step 2/4. Functionally, catalyzes the isomerization between 2-isopropylmalate and 3-isopropylmalate, via the formation of 2-isopropylmaleate. In Phenylobacterium zucineum (strain HLK1), this protein is 3-isopropylmalate dehydratase large subunit.